A 337-amino-acid chain; its full sequence is Glyceraldehyde-3-phosphate dehydrogenase (337 aa).

NAD(+)-binding positions include 12–13 (RI), Asp34, and Lys79. D-glyceraldehyde 3-phosphate-binding positions include 150–152 (SCT), Thr181, 210–211 (TG), and Arg233. Cys151 (nucleophile) is an active-site residue. Asn315 contributes to the NAD(+) binding site.

The protein belongs to the glyceraldehyde-3-phosphate dehydrogenase family. Homotetramer.

It localises to the cytoplasm. It carries out the reaction D-glyceraldehyde 3-phosphate + phosphate + NAD(+) = (2R)-3-phospho-glyceroyl phosphate + NADH + H(+). Its pathway is carbohydrate degradation; glycolysis; pyruvate from D-glyceraldehyde 3-phosphate: step 1/5. This Cochliobolus lunatus (Filamentous fungus) protein is Glyceraldehyde-3-phosphate dehydrogenase (GPD).